The chain runs to 124 residues: Small ribosomal subunit protein uS12 (124 aa).

Aspartate 89 bears the 3-methylthioaspartic acid mark. The tract at residues 104-124 (SAGVQNRNRGRSKYGTKRPKK) is disordered. Over residues 111–124 (NRGRSKYGTKRPKK) the composition is skewed to basic residues.

The protein belongs to the universal ribosomal protein uS12 family. Part of the 30S ribosomal subunit. Contacts proteins S8 and S17. May interact with IF1 in the 30S initiation complex.

Functionally, with S4 and S5 plays an important role in translational accuracy. Interacts with and stabilizes bases of the 16S rRNA that are involved in tRNA selection in the A site and with the mRNA backbone. Located at the interface of the 30S and 50S subunits, it traverses the body of the 30S subunit contacting proteins on the other side and probably holding the rRNA structure together. The combined cluster of proteins S8, S12 and S17 appears to hold together the shoulder and platform of the 30S subunit. The protein is Small ribosomal subunit protein uS12 of Desulforamulus reducens (strain ATCC BAA-1160 / DSM 100696 / MI-1) (Desulfotomaculum reducens).